The sequence spans 61 residues: Small ribosomal subunit protein uS14 (61 aa).

Residues Cys24, Cys27, Cys40, and Cys43 each contribute to the Zn(2+) site.

It belongs to the universal ribosomal protein uS14 family. Zinc-binding uS14 subfamily. Part of the 30S ribosomal subunit. Contacts proteins S3 and S10. It depends on Zn(2+) as a cofactor.

In terms of biological role, binds 16S rRNA, required for the assembly of 30S particles and may also be responsible for determining the conformation of the 16S rRNA at the A site. In Alkaliphilus oremlandii (strain OhILAs) (Clostridium oremlandii (strain OhILAs)), this protein is Small ribosomal subunit protein uS14.